A 984-amino-acid chain; its full sequence is Putative formate dehydrogenase SAV2309 (984 aa).

The 2Fe-2S ferredoxin-type domain maps to 3 to 79 (EHLVVTLDGK…PMTVNTVNND (77 aa)). Positions 37, 48, 51, and 63 each coordinate [2Fe-2S] cluster. The 4Fe-4S His(Cys)3-ligated-type domain occupies 79-119 (DVKDAQKEALDRILEKHMLYCTVCDYNNGDCEIHNTMDAWG). Residues His95, Cys99, Cys102, Cys109, Cys147, Cys150, Cys153, Cys157, Cys190, Cys193, Cys196, Cys200, Cys264, Cys267, Cys271, and Cys299 each coordinate [4Fe-4S] cluster. 2 4Fe-4S ferredoxin-type domains span residues 138–165 (PFYR…VNET) and 181–211 (NDVP…VNME). Residues 252 to 984 (MRKERIKKTK…YVFPGNQVDK (733 aa)) are formate dehydrogenase. In terms of domain architecture, 4Fe-4S Mo/W bis-MGD-type spans 257–313 (IKKTKTVCTYCGVGCSFEVWTKDREILKVQPSHDSPANKIVTCVKGKFSWGHINSDQ).

It in the C-terminal section; belongs to the prokaryotic molybdopterin-containing oxidoreductase family. [2Fe-2S] cluster is required as a cofactor. The cofactor is [4Fe-4S] cluster. It depends on Mo-bis(molybdopterin guanine dinucleotide) as a cofactor.

It catalyses the reaction formate + NAD(+) = CO2 + NADH. The sequence is that of Putative formate dehydrogenase SAV2309 from Staphylococcus aureus (strain Mu50 / ATCC 700699).